Consider the following 251-residue polypeptide: Transcriptional cofactor Bfc (251 aa).

Interacts with srp (via GATA-type Zn-finger domain); this interaction enhances srp binding to the promoter of crq/croquemort.

The protein localises to the nucleus. Functionally, transcriptional cofactor involved in efferocytosis. Together with srp mediates expression of the phagocytic receptor crq/croquemort in response to apoptotic cells, and is up-regulated by crq/croquemort in a positive feedback mechanism. Involved in macrophage engulfment and clearance of apoptotic cells during embryogenesis. The sequence is that of Transcriptional cofactor Bfc from Drosophila melanogaster (Fruit fly).